Consider the following 355-residue polypeptide: tRNA N6-adenosine threonylcarbamoyltransferase (355 aa).

Residues His-110 and His-114 each coordinate Fe cation. Residues 132–136 (LVSGG), Asp-165, Gly-178, Asp-182, and Asn-288 contribute to the substrate site. A Fe cation-binding site is contributed by Asp-316.

The protein belongs to the KAE1 / TsaD family. The cofactor is Fe(2+).

It is found in the cytoplasm. The catalysed reaction is L-threonylcarbamoyladenylate + adenosine(37) in tRNA = N(6)-L-threonylcarbamoyladenosine(37) in tRNA + AMP + H(+). In terms of biological role, required for the formation of a threonylcarbamoyl group on adenosine at position 37 (t(6)A37) in tRNAs that read codons beginning with adenine. Is involved in the transfer of the threonylcarbamoyl moiety of threonylcarbamoyl-AMP (TC-AMP) to the N6 group of A37, together with TsaE and TsaB. TsaD likely plays a direct catalytic role in this reaction. The chain is tRNA N6-adenosine threonylcarbamoyltransferase from Lawsonia intracellularis (strain PHE/MN1-00).